The chain runs to 792 residues: Phenylalanine--tRNA ligase beta subunit (792 aa).

The region spanning 38–148 (NTKLAGFIVA…DDYKVGNKFF (111 aa)) is the tRNA-binding domain. The B5 domain maps to 406–482 (EADTKVSFDY…RIYGYDKIKE (77 aa)). Mg(2+) is bound by residues aspartate 460, aspartate 466, glutamate 469, and glutamate 470. Positions 698-790 (YKHQSVKRDF…VHKNTGGILR (93 aa)) constitute an FDX-ACB domain.

The protein belongs to the phenylalanyl-tRNA synthetase beta subunit family. Type 1 subfamily. Tetramer of two alpha and two beta subunits. Mg(2+) serves as cofactor.

It localises to the cytoplasm. It catalyses the reaction tRNA(Phe) + L-phenylalanine + ATP = L-phenylalanyl-tRNA(Phe) + AMP + diphosphate + H(+). In Wolbachia sp. subsp. Brugia malayi (strain TRS), this protein is Phenylalanine--tRNA ligase beta subunit.